A 746-amino-acid chain; its full sequence is Ferric enterobactin receptor (746 aa).

Positions 1–25 are cleaved as a signal peptide; that stretch reads MSSRALPAVPFLLLSSCLLANAVHA. Residues 39-44 carry the TonB box motif; the sequence is QTVVAT. A TBDR plug domain is found at 47 to 174; that stretch reads EETKQAPGVS…AGGVVNIITK (128 aa). 3 disordered regions span residues 82-102, 235-254, and 397-424; these read VNLT…IDIR, GHES…GREG, and QKLD…KNRS. Positions 84–98 are enriched in polar residues; the sequence is LTGNSSSGQRGNNRQ. Residues 179–746 form the TBDR beta-barrel domain; sequence ETHGNLSVYS…TFYTSLTASF (568 aa). A compositionally biased stretch (polar residues) spans 402–411; the sequence is PSSNTQNTEE. A TonB C-terminal box motif is present at residues 729 to 746; that stretch reads ATYNEPGRTFYTSLTASF.

This sequence belongs to the TonB-dependent receptor family.

The protein localises to the cell outer membrane. Its function is as follows. Specific receptor for the siderophore ferric enterobactin. The polypeptide is Ferric enterobactin receptor (pfeA) (Pseudomonas aeruginosa (strain ATCC 15692 / DSM 22644 / CIP 104116 / JCM 14847 / LMG 12228 / 1C / PRS 101 / PAO1)).